We begin with the raw amino-acid sequence, 295 residues long: Glycine--tRNA ligase alpha subunit (295 aa).

It belongs to the class-II aminoacyl-tRNA synthetase family. Tetramer of two alpha and two beta subunits.

The protein localises to the cytoplasm. The catalysed reaction is tRNA(Gly) + glycine + ATP = glycyl-tRNA(Gly) + AMP + diphosphate. The polypeptide is Glycine--tRNA ligase alpha subunit (Prochlorococcus marinus (strain MIT 9215)).